The chain runs to 282 residues: Chlorite dismutase (282 aa).

Residues 1–31 form the signal peptide; the sequence is MTNLSIHNFKLSLVAAVIGSAMVMTSSPVAA. Position 104 (glutamate 104) interacts with Ca(2+). Residue histidine 204 coordinates heme. The active-site Proton acceptor is the arginine 217. Positions 226 and 265 each coordinate Ca(2+).

It belongs to the chlorite dismutase family. As to quaternary structure, homopentamer. Heme b serves as cofactor.

The protein resides in the periplasm. The catalysed reaction is chloride + O2 = chlorite. In terms of biological role, catalyzes the heme-dependent decomposition of chlorite to O(2) and chloride with high efficiency and specificity. Used to detoxify chlorite, a by-product of the reduction of perchlorate, a primarily anthropogenic pollutant, in perchlorate-respiring bacteria. In Dechloromonas aromatica (strain RCB), this protein is Chlorite dismutase.